The primary structure comprises 389 residues: Cytochrome b (389 aa).

A run of 4 helical transmembrane segments spans residues F32–M52, W76–G98, L113–V133, and F179–M199. Residues H82 and H96 each coordinate heme b. The heme b site is built by H183 and H197. An a ubiquinone-binding site is contributed by H202. 4 helical membrane passes run F225 to F245, L289 to D309, A321 to S341, and Y348 to P368.

Belongs to the cytochrome b family. As to quaternary structure, fungal cytochrome b-c1 complex contains 10 subunits; 3 respiratory subunits, 2 core proteins and 5 low-molecular weight proteins. Cytochrome b-c1 complex is a homodimer. Heme b serves as cofactor.

The protein resides in the mitochondrion inner membrane. Its function is as follows. Component of the ubiquinol-cytochrome c reductase complex (complex III or cytochrome b-c1 complex) that is part of the mitochondrial respiratory chain. The b-c1 complex mediates electron transfer from ubiquinol to cytochrome c. Contributes to the generation of a proton gradient across the mitochondrial membrane that is then used for ATP synthesis. This Strobilurus tenacellus protein is Cytochrome b (COB).